Reading from the N-terminus, the 75-residue chain is Small ribosomal subunit protein bS18 (75 aa).

The protein belongs to the bacterial ribosomal protein bS18 family. In terms of assembly, part of the 30S ribosomal subunit. Forms a tight heterodimer with protein bS6.

In terms of biological role, binds as a heterodimer with protein bS6 to the central domain of the 16S rRNA, where it helps stabilize the platform of the 30S subunit. The chain is Small ribosomal subunit protein bS18 from Baumannia cicadellinicola subsp. Homalodisca coagulata.